Consider the following 921-residue polypeptide: Isoleucine--tRNA ligase (921 aa).

The 'HIGH' region signature appears at 57–67; it reads PYANGDIHMGH. L-isoleucyl-5'-AMP is bound at residue E552. The short motif at 593–597 is the 'KMSKS' region element; that stretch reads KMSKS. An ATP-binding site is contributed by K596. The Zn(2+) site is built by C888, C891, C908, and C911.

This sequence belongs to the class-I aminoacyl-tRNA synthetase family. IleS type 1 subfamily. In terms of assembly, monomer. Requires Zn(2+) as cofactor.

The protein localises to the cytoplasm. It carries out the reaction tRNA(Ile) + L-isoleucine + ATP = L-isoleucyl-tRNA(Ile) + AMP + diphosphate. In terms of biological role, catalyzes the attachment of isoleucine to tRNA(Ile). As IleRS can inadvertently accommodate and process structurally similar amino acids such as valine, to avoid such errors it has two additional distinct tRNA(Ile)-dependent editing activities. One activity is designated as 'pretransfer' editing and involves the hydrolysis of activated Val-AMP. The other activity is designated 'posttransfer' editing and involves deacylation of mischarged Val-tRNA(Ile). In Bacillus mycoides (strain KBAB4) (Bacillus weihenstephanensis), this protein is Isoleucine--tRNA ligase.